The following is a 198-amino-acid chain: Small ribosomal subunit protein uS7 (198 aa).

This sequence belongs to the universal ribosomal protein uS7 family. In terms of assembly, part of the 30S ribosomal subunit.

Functionally, one of the primary rRNA binding proteins, it binds directly to 16S rRNA where it nucleates assembly of the head domain of the 30S subunit. Is located at the subunit interface close to the decoding center. This is Small ribosomal subunit protein uS7 from Nanoarchaeum equitans (strain Kin4-M).